The primary structure comprises 502 residues: MKFFIKNVLLEEEKSDCIVIGVFEFCEFKYSNNYLNKSICSYINNFIKKGDMQGKVGETLLLYDVPNVVSKRILLVGCGKKNRLNRYYLDKIINKSMKILNKFSIKNIIFSLTEINIENYDIYWSIRTIVNSINKYLYKNFKINAFLKKEVYLNSISFHIIEKKDFHIANNSLKHALAINSGITAAKNLADLPPNICNPLYLSLQAQKLSEKYKDKIHVTSIDIKEMNNLGMNAYVAVGKGSKNKPYMSVIKYSGINNTEQEKIIVLIGKGLTFDSGGISIKPSNNMNEMKYDMCGAAAVYGTLIAAAKLNLPLTIIGILAGCENMPGGNAFRPGDIITTMSGKTVEILNTDAEGRLVLCDVLTYVQRFSPNIVIDIATLTGACVVALGNHFSGLFSNDDQLAYALEKSSRQTNDKIWRLPLSLEYEKELHSNFADLSNVGRGKAGAITASCFLAQFSKKYTWAHLDIAGTAWKSGKNHGATGRPVELLSQFLLNESNFLKF.

Mn(2+) is bound by residues Lys-270 and Asp-275. Lys-282 is a catalytic residue. Residues Asp-293, Asp-352, and Glu-354 each coordinate Mn(2+). Residue Arg-356 is part of the active site.

The protein belongs to the peptidase M17 family. Mn(2+) is required as a cofactor.

Its subcellular location is the cytoplasm. The enzyme catalyses Release of an N-terminal amino acid, Xaa-|-Yaa-, in which Xaa is preferably Leu, but may be other amino acids including Pro although not Arg or Lys, and Yaa may be Pro. Amino acid amides and methyl esters are also readily hydrolyzed, but rates on arylamides are exceedingly low.. The catalysed reaction is Release of an N-terminal amino acid, preferentially leucine, but not glutamic or aspartic acids.. In terms of biological role, presumably involved in the processing and regular turnover of intracellular proteins. Catalyzes the removal of unsubstituted N-terminal amino acids from various peptides. The protein is Probable cytosol aminopeptidase of Buchnera aphidicola subsp. Schizaphis graminum (strain Sg).